Reading from the N-terminus, the 418-residue chain is Light-independent protochlorophyllide reductase subunit N (418 aa).

The [4Fe-4S] cluster site is built by C17, C42, and C103.

It belongs to the BchN/ChlN family. Protochlorophyllide reductase is composed of three subunits; ChlL, ChlN and ChlB. Forms a heterotetramer of two ChlB and two ChlN subunits. It depends on [4Fe-4S] cluster as a cofactor.

The catalysed reaction is chlorophyllide a + oxidized 2[4Fe-4S]-[ferredoxin] + 2 ADP + 2 phosphate = protochlorophyllide a + reduced 2[4Fe-4S]-[ferredoxin] + 2 ATP + 2 H2O. The protein operates within porphyrin-containing compound metabolism; chlorophyll biosynthesis (light-independent). In terms of biological role, component of the dark-operative protochlorophyllide reductase (DPOR) that uses Mg-ATP and reduced ferredoxin to reduce ring D of protochlorophyllide (Pchlide) to form chlorophyllide a (Chlide). This reaction is light-independent. The NB-protein (ChlN-ChlB) is the catalytic component of the complex. The protein is Light-independent protochlorophyllide reductase subunit N of Prochlorococcus marinus (strain MIT 9303).